The following is a 207-amino-acid chain: Protein dct-5 (207 aa).

The helical transmembrane segment at 13–33 (LNFILSIMNSYLFVLIVSIGF) threads the bilayer.

The protein localises to the membrane. In terms of biological role, acts downstream of daf-16/foxo to suppress tumors induced by disruption of gld-1. Potentially a direct target of daf-15/foxo. This is Protein dct-5 (dct-5) from Caenorhabditis elegans.